The primary structure comprises 464 residues: Major capsid protein (464 aa).

The protein belongs to the NCLDV major capsid protein family. As to quaternary structure, homotrimer. The N-terminus is blocked.

The protein resides in the virion. Major capsid protein that self assembles to form an icosahedral capsid. Represents around 50% of the total virion protein mass. This Tipula (TIV) protein is Major capsid protein (MCP).